The following is a 368-amino-acid chain: Agmatine deiminase (368 aa).

Cysteine 357 functions as the Amidino-cysteine intermediate in the catalytic mechanism.

It belongs to the agmatine deiminase family. Homodimer.

It carries out the reaction agmatine + H2O = N-carbamoylputrescine + NH4(+). It functions in the pathway amine and polyamine biosynthesis; putrescine biosynthesis via agmatine pathway; N-carbamoylputrescine from agmatine: step 1/1. Functionally, mediates the hydrolysis of agmatine into N-carbamoylputrescine in the arginine decarboxylase (ADC) pathway of putrescine biosynthesis, a basic polyamine. This is Agmatine deiminase from Pseudomonas putida (strain ATCC 700007 / DSM 6899 / JCM 31910 / BCRC 17059 / LMG 24140 / F1).